Consider the following 716-residue polypeptide: UvrABC system protein C (716 aa).

A GIY-YIG domain is found at 14 to 94 (AEPGCYLMKD…IKRHRPRFNI (81 aa)). Residues 206–241 (TELVERLHGRMDEAADALRFEDAARLRDQLQAVERS) enclose the UVR domain.

Belongs to the UvrC family. Interacts with UvrB in an incision complex.

Its subcellular location is the cytoplasm. The UvrABC repair system catalyzes the recognition and processing of DNA lesions. UvrC both incises the 5' and 3' sides of the lesion. The N-terminal half is responsible for the 3' incision and the C-terminal half is responsible for the 5' incision. This chain is UvrABC system protein C, found in Anaeromyxobacter sp. (strain Fw109-5).